A 311-amino-acid polypeptide reads, in one-letter code: Putative UPF0607 protein ENSP00000382826 (311 aa).

Basic and acidic residues predominate over residues 48–61 (AEEPKEATEVKDQV). Disordered stretches follow at residues 48-99 (AEEP…WYNP), 186-229 (GLLM…PLQL), and 291-311 (RKQL…GSCL). A compositionally biased stretch (polar residues) spans 78–97 (EAASTSRPLETQGNLTSSWY). Composition is skewed to basic residues over residues 213-222 (AGHRSRKRKL) and 291-305 (RKQL…RQGR).

It belongs to the UPF0607 family.

The chain is Putative UPF0607 protein ENSP00000382826 from Homo sapiens (Human).